A 278-amino-acid polypeptide reads, in one-letter code: Dermonecrotic toxin Ls4SicTox-alphaIII1ii (278 aa).

Histidine 5 is an active-site residue. Glutamate 25 and aspartate 27 together coordinate Mg(2+). The Nucleophile role is filled by histidine 40. Cysteine 44 and cysteine 50 are disulfide-bonded. Residue aspartate 84 participates in Mg(2+) binding.

It belongs to the arthropod phospholipase D family. Class I subfamily. Requires Mg(2+) as cofactor. In terms of tissue distribution, expressed by the venom gland.

The protein localises to the secreted. It carries out the reaction an N-(acyl)-sphingosylphosphocholine = an N-(acyl)-sphingosyl-1,3-cyclic phosphate + choline. The enzyme catalyses an N-(acyl)-sphingosylphosphoethanolamine = an N-(acyl)-sphingosyl-1,3-cyclic phosphate + ethanolamine. The catalysed reaction is a 1-acyl-sn-glycero-3-phosphocholine = a 1-acyl-sn-glycero-2,3-cyclic phosphate + choline. It catalyses the reaction a 1-acyl-sn-glycero-3-phosphoethanolamine = a 1-acyl-sn-glycero-2,3-cyclic phosphate + ethanolamine. Its function is as follows. Dermonecrotic toxins cleave the phosphodiester linkage between the phosphate and headgroup of certain phospholipids (sphingolipid and lysolipid substrates), forming an alcohol (often choline) and a cyclic phosphate. This toxin acts on sphingomyelin (SM). It may also act on ceramide phosphoethanolamine (CPE), lysophosphatidylcholine (LPC) and lysophosphatidylethanolamine (LPE), but not on lysophosphatidylserine (LPS), and lysophosphatidylglycerol (LPG). It acts by transphosphatidylation, releasing exclusively cyclic phosphate products as second products. Induces dermonecrosis, hemolysis, increased vascular permeability, edema, inflammatory response, and platelet aggregation. The protein is Dermonecrotic toxin Ls4SicTox-alphaIII1ii of Loxosceles sp. (strain 4 GJB-2008) (Recluse spider).